A 177-amino-acid polypeptide reads, in one-letter code: MLRRLVQQWSVAVFLLSYSVPSCGRSVEGPGRRLKRAVSEHQLLHDKGKSIQDLRRRFFLHHLIAEIHTAEIRATSEVSPNSKPAANTKNHAVRFGSDDEGRYLTQETNKVEPYKEQPLKTPGKKKKGKPGKRKEQEKKKRRTRSAWPLSAGAGSGLAGDHLSDISEPEPELDSRRH.

A signal peptide spans 1-24 (MLRRLVQQWSVAVFLLSYSVPSCG). Residues 25 to 34 (RSVEGPGRRL) constitute a propeptide that is removed on maturation. The important for receptor binding stretch occupies residues 57–68 (RFFLHHLIAEIH). Residues 74–177 (ATSEVSPNSK…PEPELDSRRH (104 aa)) form a disordered region. The segment covering 76-90 (SEVSPNSKPAANTKN) has biased composition (polar residues). A Nuclear localization signal motif is present at residues 108 to 129 (TNKVEPYKEQPLKTPGKKKKGK). Positions 109-118 (NKVEPYKEQP) are enriched in basic and acidic residues. Residues 122–132 (PGKKKKGKPGK) show a composition bias toward basic residues.

The protein belongs to the parathyroid hormone family. PTHrP interacts with PTH1R (via N-terminal extracellular domain). Post-translationally, there are several secretory forms, including osteostatin, arising from endoproteolytic cleavage of the initial translation product. Each of these secretory forms is believed to have one or more of its own receptors that mediates the normal paracrine, autocrine and endocrine actions.

It localises to the secreted. Its subcellular location is the cytoplasm. The protein resides in the nucleus. Its function is as follows. Neuroendocrine peptide which is a critical regulator of cellular and organ growth, development, migration, differentiation and survival and of epithelial calcium ion transport. Acts by binding to its receptor, PTH1R, activating G protein-coupled receptor signaling. Regulates endochondral bone development and epithelial-mesenchymal interactions during the formation of the mammary glands and teeth. Required for skeletal homeostasis. Promotes mammary mesenchyme differentiation and bud outgrowth by modulating mesenchymal cell responsiveness to BMPs. Up-regulates BMPR1A expression in the mammary mesenchyme and this increases the sensitivity of these cells to BMPs and allows them to respond to BMP4 in a paracrine and/or autocrine fashion. BMP4 signaling in the mesenchyme, in turn, triggers epithelial outgrowth and augments MSX2 expression, which causes the mammary mesenchyme to inhibit hair follicle formation within the nipple sheath. Functionally, potent inhibitor of osteoclastic bone resorption. This Oryctolagus cuniculus (Rabbit) protein is Parathyroid hormone-related protein (PTHLH).